Reading from the N-terminus, the 148-residue chain is Urease accessory protein UreE (148 aa).

Belongs to the UreE family.

Its subcellular location is the cytoplasm. In terms of biological role, involved in urease metallocenter assembly. Binds nickel. Probably functions as a nickel donor during metallocenter assembly. The chain is Urease accessory protein UreE from Bacillus sp. (strain TB-90).